Here is a 346-residue protein sequence, read N- to C-terminus: Tripartite motif-containing protein 44 (346 aa).

Residues 68-167 form a disordered region; it reads TPPASGGDDA…ETEAESEFDP (100 aa). The span at 89–167 shows a compositional bias: acidic residues; it reads EGEVESEVGE…ETEAESEFDP (79 aa). The segment at 176-217 adopts a B box-type zinc-finger fold; that stretch reads VAKRKCPDHGLDLSTYCQEDRQLICVLCPVIGAHRGHQLSTL. C181, H184, C203, and H209 together coordinate Zn(2+). A coiled-coil region spans residues 292 to 327; the sequence is AHVTEILADIQSHMDRLMTQMAQAKEQLDTSNESAE. The interval 313–346 is disordered; it reads AQAKEQLDTSNESAEPKAEGDEEGPSGASEEEDT. A compositionally biased stretch (acidic residues) spans 332 to 346; the sequence is GDEEGPSGASEEEDT. 2 positions are modified to phosphoserine: S338 and S341.

As to quaternary structure, interacts (via coiled coil) with TRIM17 (via coiled coil). Expressed mainly in brain with high level in cerebral hemispheres and cerebellum. Lower expression in kidney, lung and spleen. In brain is detected in the hippocampus, thalamic and pretectal nuclei, substantia nigra, the dorsal part of the medulla, the cerebellum, in the olfactory nucleus, other cortical areas apart from hippocampus and the striatum. Indeed expression is confined in neuronal somata namely in the CA3 region and dentate gyrus of the hippocampus, caudate-putamen, parabranchial nucleus, olfactory nucleus, cortex, deep cerebellar nuclei and thalamus. Also highly expressed in the spleen. thymus and testis.

May play a role in the process of differentiation and maturation of neuronal cells. May regulate the activity of TRIM17. Is a negative regulator of PAX6 expression. This chain is Tripartite motif-containing protein 44 (Trim44), found in Mus musculus (Mouse).